We begin with the raw amino-acid sequence, 134 residues long: UPF0756 membrane protein YeaL (134 aa).

A run of 4 helical transmembrane segments spans residues 14–34 (ALGF…LIIV), 51–71 (LTVG…SGTL), 86–106 (LVAI…ITLM), and 110–130 (PQLV…FRGV).

The protein belongs to the UPF0756 family.

Its subcellular location is the cell membrane. This is UPF0756 membrane protein YeaL from Salmonella typhimurium (strain LT2 / SGSC1412 / ATCC 700720).